The chain runs to 297 residues: Acetylglutamate kinase (297 aa).

Substrate is bound by residues 72–73, arginine 94, and asparagine 193; that span reads GG.

Belongs to the acetylglutamate kinase family. ArgB subfamily.

It is found in the cytoplasm. It carries out the reaction N-acetyl-L-glutamate + ATP = N-acetyl-L-glutamyl 5-phosphate + ADP. The protein operates within amino-acid biosynthesis; L-arginine biosynthesis; N(2)-acetyl-L-ornithine from L-glutamate: step 2/4. Functionally, catalyzes the ATP-dependent phosphorylation of N-acetyl-L-glutamate. This Mycobacterium leprae (strain TN) protein is Acetylglutamate kinase.